A 108-amino-acid polypeptide reads, in one-letter code: Insulin (108 aa).

An N-terminal signal peptide occupies residues 1–24; it reads MALWTRLLPLLALLALWAPAPAQA. 3 disulfides stabilise this stretch: Cys-31–Cys-94, Cys-43–Cys-107, and Cys-93–Cys-98. A propeptide spans 57-85 (c peptide); that stretch reads EAENPQAGAVELGGGLGGLQALALEGPPQ.

It belongs to the insulin family. Heterodimer of a B chain and an A chain linked by two disulfide bonds.

The protein localises to the secreted. Functionally, insulin decreases blood glucose concentration. It increases cell permeability to monosaccharides, amino acids and fatty acids. It accelerates glycolysis, the pentose phosphate cycle, and glycogen synthesis in liver. This is Insulin (INS) from Sus scrofa (Pig).